Here is a 218-residue protein sequence, read N- to C-terminus: Cytochrome P450 3A19 (218 aa).

Position 153 (Cys153) interacts with heme.

This sequence belongs to the cytochrome P450 family. Requires heme as cofactor.

The protein localises to the endoplasmic reticulum membrane. Its subcellular location is the microsome membrane. It carries out the reaction an organic molecule + reduced [NADPH--hemoprotein reductase] + O2 = an alcohol + oxidized [NADPH--hemoprotein reductase] + H2O + H(+). Its function is as follows. Cytochromes P450 are a group of heme-thiolate monooxygenases. In liver microsomes, this enzyme is involved in an NADPH-dependent electron transport pathway. It oxidizes a variety of structurally unrelated compounds, including steroids, fatty acids, and xenobiotics. The chain is Cytochrome P450 3A19 (CYP3A19) from Capra hircus aegagrus (Wild goat).